Reading from the N-terminus, the 177-residue chain is Protein VERNALIZATION 3 (177 aa).

The protein belongs to the phosphatidylethanolamine-binding protein family. Expressed in leaves but not in shoot apex.

Its function is as follows. Involved in the regulation of vernalization and of flowering time; this process in essential for flowering in cv. Bd29-1 but seems do not occur in cv. Bd21. The protein is Protein VERNALIZATION 3 of Brachypodium distachyon (Purple false brome).